The following is a 901-amino-acid chain: Protein translocase subunit SecA 1 (901 aa).

ATP is bound by residues Gln-89, 107–111 (GEGKT), and Asp-502. The interval 856-875 (AEAKASGDARPGFVEDDPST) is disordered. Positions 885, 887, 896, and 897 each coordinate Zn(2+).

The protein belongs to the SecA family. In terms of assembly, monomer and homodimer. Part of the essential Sec protein translocation apparatus which comprises SecA, SecYEG and auxiliary proteins SecDF-YajC and YidC. It depends on Zn(2+) as a cofactor.

It is found in the cell inner membrane. The protein localises to the cytoplasm. The catalysed reaction is ATP + H2O + cellular proteinSide 1 = ADP + phosphate + cellular proteinSide 2.. Functionally, part of the Sec protein translocase complex. Interacts with the SecYEG preprotein conducting channel. Has a central role in coupling the hydrolysis of ATP to the transfer of proteins into and across the cell membrane, serving both as a receptor for the preprotein-SecB complex and as an ATP-driven molecular motor driving the stepwise translocation of polypeptide chains across the membrane. This Ruegeria pomeroyi (strain ATCC 700808 / DSM 15171 / DSS-3) (Silicibacter pomeroyi) protein is Protein translocase subunit SecA 1.